A 262-amino-acid chain; its full sequence is Iso-A82775C biosynthesis cluster protein B (262 aa).

Functionally, part of the gene cluster that mediates the biosynthesis of iso-A82775C, a enylepoxycyclohexane and biosynthetic precursor of the chloropestolide anticancer natural products. Within the cluster, the prenyltransferase iacE prenylates siccayne to generate pestalodiol E, using dimethylallyl diphosphate (DMAPP) as cosubstrate. The probable oxidoreductase iacF is then involved in the epoxidation of pestalodiol F to pestalodiol F, which is further converted to pestalofone A by the short-chain dehydrogenase/reductase iacG. Iso-A82775C is subsequently generated from pestalofone A by the short-chain dehydrogenase/reductase iacC. Iso-A82775C is further condensed with maldoxin via a Diels-Alder reaction to produce the anticancer natural products chloropestolides A to E. This chain is Iso-A82775C biosynthesis cluster protein B, found in Pestalotiopsis fici (strain W106-1 / CGMCC3.15140).